Here is a 312-residue protein sequence, read N- to C-terminus: uncharacterized protein (312 aa).

Residues Ser200, Asp261, and His292 each act as charge relay system in the active site.

It belongs to the AB hydrolase superfamily. AB hydrolase 2 family.

This is an uncharacterized protein from Acanthamoeba polyphaga mimivirus (APMV).